The primary structure comprises 859 residues: Transforming growth factor-beta receptor-associated protein 1 (859 aa).

The 274-residue stretch at 24–297 (RGLLECVECC…HILQDFEGRV (274 aa)) folds into the CNH domain. A CHCR repeat occupies 563-727 (KRPLDEQQSG…LLAVYLGPGP (165 aa)).

This sequence belongs to the TRAP1 family. In terms of assembly, interacts with TGFBR2 and ACVR2B; in the absence of ligand stimulation. Interacts with TGFBR1, ACVRL1, BMPR1A and ACVR1B; in the absence of ligand stimulation and to a less extent. Interacts with SMAD4; the interaction seems to be mutually exclusive with the interaction of SMAD4 and phosphorylated SMAD2. May interact with ALOX5. Interacts with RAB5C. Interacts with VPS8, VPS11 and VPS16. Component of the putative class C core vacuole/endosome tethering (CORVET) complex; the core of which composed of the class C Vps proteins VPS11, VPS16, VPS18 and VPS33A, is associated with VPS8 and TGFBRAP1.

The protein localises to the cytoplasm. It localises to the early endosome. Plays a role in the TGF-beta/activin signaling pathway. It associates with inactive heteromeric TGF-beta and activin receptor complexes, mainly through the type II receptor, and is released upon activation of signaling. May recruit SMAD4 to the vicinity of the receptor complex and facilitate its interaction with receptor-regulated Smads, such as SMAD2. In terms of biological role, plays a role in vesicle-mediated protein trafficking of the endocytic membrane transport pathway. Believed to act as a component of the putative CORVET endosomal tethering complexes which is proposed to be involved in the Rab5-to-Rab7 endosome conversion probably implicating MON1A/B, and via binding SNAREs and SNARE complexes to mediate tethering and docking events during SNARE-mediated membrane fusion. The CORVET complex is proposed to function as a Rab5 effector to mediate early endosome fusion probably in specific endosome subpopulations. Functions predominantly in APPL1-containing endosomes and in degradative but not recycling trafficking of endocytosed cargo. The chain is Transforming growth factor-beta receptor-associated protein 1 (TGFBRAP1) from Bos taurus (Bovine).